The following is a 638-amino-acid chain: 1-deoxy-D-xylulose-5-phosphate synthase (638 aa).

Thiamine diphosphate-binding positions include His79 and 120–122 (GHS). Asp151 serves as a coordination point for Mg(2+). Thiamine diphosphate contacts are provided by residues 152-153 (GA), Asn182, Tyr291, and Glu373. Mg(2+) is bound at residue Asn182.

Belongs to the transketolase family. DXPS subfamily. Homodimer. Mg(2+) serves as cofactor. It depends on thiamine diphosphate as a cofactor.

It carries out the reaction D-glyceraldehyde 3-phosphate + pyruvate + H(+) = 1-deoxy-D-xylulose 5-phosphate + CO2. It functions in the pathway metabolic intermediate biosynthesis; 1-deoxy-D-xylulose 5-phosphate biosynthesis; 1-deoxy-D-xylulose 5-phosphate from D-glyceraldehyde 3-phosphate and pyruvate: step 1/1. Its function is as follows. Catalyzes the acyloin condensation reaction between C atoms 2 and 3 of pyruvate and glyceraldehyde 3-phosphate to yield 1-deoxy-D-xylulose-5-phosphate (DXP). The chain is 1-deoxy-D-xylulose-5-phosphate synthase from Xanthomonas campestris pv. campestris (strain 8004).